An 89-amino-acid chain; its full sequence is Large ribosomal subunit protein bL28 (89 aa).

Belongs to the bacterial ribosomal protein bL28 family.

The chain is Large ribosomal subunit protein bL28 from Chlamydia trachomatis serovar L2 (strain ATCC VR-902B / DSM 19102 / 434/Bu).